We begin with the raw amino-acid sequence, 662 residues long: Rap guanine nucleotide exchange factor-like 1 (662 aa).

The disordered stretch occupies residues 1–149 (MKPLEKFLKK…PPWAPLGAPE (149 aa)). Residues 20–48 (VAGGPGGGLGSCGGPGGGGGPGGGGGPAG) are compositionally biased toward gly residues. A compositionally biased stretch (low complexity) spans 49 to 64 (GQRSLQRRQSVSRLLL). A compositionally biased stretch (pro residues) spans 73–82 (AEPGLEPPVP). The span at 120–135 (LRSPSSYSSDELSPGE) shows a compositional bias: low complexity. One can recognise a Ras-GEF domain in the interval 424–660 (EPEDVANHLT…FELSYKLEAN (237 aa)).

Functionally, probable guanine nucleotide exchange factor (GEF). The protein is Rap guanine nucleotide exchange factor-like 1 (RAPGEFL1) of Homo sapiens (Human).